Consider the following 233-residue polypeptide: Somatolactin (233 aa).

An N-terminal signal peptide occupies residues 1-24 (MNMMQVMQSVVWAVLLWPCLVSLG). Intrachain disulfides connect Cys-29-Cys-39, Cys-89-Cys-205, and Cys-222-Cys-230.

Belongs to the somatotropin/prolactin family. Pituitary gland.

The protein resides in the secreted. May be associated with ion regulation and reproduction. The sequence is that of Somatolactin from Oncorhynchus keta (Chum salmon).